Here is a 110-residue protein sequence, read N- to C-terminus: Phosphoribosyl-ATP pyrophosphatase (110 aa).

This sequence belongs to the PRA-PH family.

It is found in the cytoplasm. The enzyme catalyses 1-(5-phospho-beta-D-ribosyl)-ATP + H2O = 1-(5-phospho-beta-D-ribosyl)-5'-AMP + diphosphate + H(+). The protein operates within amino-acid biosynthesis; L-histidine biosynthesis; L-histidine from 5-phospho-alpha-D-ribose 1-diphosphate: step 2/9. The polypeptide is Phosphoribosyl-ATP pyrophosphatase (Hahella chejuensis (strain KCTC 2396)).